The primary structure comprises 2542 residues: Probable polyketide synthase 41 (2542 aa).

The 431-residue stretch at Cys-11–Ser-441 folds into the Ketosynthase family 3 (KS3) domain. Residues Cys-177, His-318, and His-360 each act as for beta-ketoacyl synthase activity in the active site. Residues Gly-628 to Tyr-661 are acyl/malonyl transferase. The For acyl/malonyl transferase activity role is filled by Ser-638. The segment at Ile-926 to Pro-1059 is N-terminal hotdog fold. Residues Ile-926–Pro-1231 enclose the PKS/mFAS DH domain. His-959 serves as the catalytic Proton acceptor; for dehydratase activity. Residues Asn-1083–Pro-1231 form a C-terminal hotdog fold region. Residue Asp-1145 is the Proton donor; for dehydratase activity of the active site. The 79-residue stretch at Asn-2459 to Met-2537 folds into the Carrier domain. Ser-2496 bears the O-(pantetheine 4'-phosphoryl)serine mark.

Pantetheine 4'-phosphate is required as a cofactor.

Probable polyketide synthase. The protein is Probable polyketide synthase 41 (pks41) of Dictyostelium discoideum (Social amoeba).